A 405-amino-acid polypeptide reads, in one-letter code: Transposase from transposon Tn916 (405 aa).

One can recognise a Core-binding (CB) domain in the interval 79–163; it reads GKKMTLCQLY…SLKASFYIAI (85 aa). A Tyr recombinase domain is found at 186–392; it reads VPKTVLTEEQ…TFDSAMAEMK (207 aa). Active-site residues include Arg-225, Lys-264, His-343, Arg-346, and His-369. The O-(3'-phospho-DNA)-tyrosine intermediate role is filled by Tyr-379.

The protein belongs to the 'phage' integrase family.

This chain is Transposase from transposon Tn916 (Int-Tn), found in Enterococcus faecalis (Streptococcus faecalis).